Reading from the N-terminus, the 473-residue chain is Photosystem II CP43 reaction center protein (473 aa).

The propeptide occupies 1-14 (MKTLYSLRRFYPVE). Thr-15 carries the N-acetylthreonine modification. Thr-15 bears the Phosphothreonine mark. The next 5 helical transmembrane spans lie at 69–93 (LFEV…PHLA), 134–155 (LLGP…KDRN), 178–200 (KALY…RKIT), 255–275 (KPFA…LSYS), and 291–312 (WFNN…ASQA). Residue Glu-367 coordinates [CaMn4O5] cluster. The helical transmembrane segment at 447–471 (RARAAAAGFEKGIDRDFEPVLSMTP) threads the bilayer.

Belongs to the PsbB/PsbC family. PsbC subfamily. In terms of assembly, PSII is composed of 1 copy each of membrane proteins PsbA, PsbB, PsbC, PsbD, PsbE, PsbF, PsbH, PsbI, PsbJ, PsbK, PsbL, PsbM, PsbT, PsbX, PsbY, PsbZ, Psb30/Ycf12, at least 3 peripheral proteins of the oxygen-evolving complex and a large number of cofactors. It forms dimeric complexes. Requires Binds multiple chlorophylls and provides some of the ligands for the Ca-4Mn-5O cluster of the oxygen-evolving complex. It may also provide a ligand for a Cl- that is required for oxygen evolution. PSII binds additional chlorophylls, carotenoids and specific lipids. as cofactor.

The protein localises to the plastid. It is found in the chloroplast thylakoid membrane. In terms of biological role, one of the components of the core complex of photosystem II (PSII). It binds chlorophyll and helps catalyze the primary light-induced photochemical processes of PSII. PSII is a light-driven water:plastoquinone oxidoreductase, using light energy to abstract electrons from H(2)O, generating O(2) and a proton gradient subsequently used for ATP formation. This is Photosystem II CP43 reaction center protein from Morus indica (Mulberry).